The primary structure comprises 227 residues: Cytochrome c oxidase subunit 2 (227 aa).

The Mitochondrial intermembrane portion of the chain corresponds to 1–26 (MATWSNLSIQDGASPLMEQLSFFHDD). A helical transmembrane segment spans residues 27 to 48 (HTMVVLLITVIVGYALSYMLFN). Residues 49 to 62 (AYTNRNMLHGHLIE) are Mitochondrial matrix-facing. The chain crosses the membrane as a helical span at residues 63 to 82 (TIWTALPAITLIFIALPSLR). Residues 83 to 227 (LLYLLDDSVD…LFIKWLSKMI (145 aa)) lie on the Mitochondrial intermembrane side of the membrane. 6 residues coordinate Cu cation: H161, C196, E198, C200, H204, and M207. Position 198 (E198) interacts with Mg(2+).

The protein belongs to the cytochrome c oxidase subunit 2 family. Component of the cytochrome c oxidase (complex IV, CIV), a multisubunit enzyme composed of a catalytic core of 3 subunits and several supernumerary subunits. The complex exists as a monomer or a dimer and forms supercomplexes (SCs) in the inner mitochondrial membrane with ubiquinol-cytochrome c oxidoreductase (cytochrome b-c1 complex, complex III, CIII). Cu cation is required as a cofactor.

It localises to the mitochondrion inner membrane. It carries out the reaction 4 Fe(II)-[cytochrome c] + O2 + 8 H(+)(in) = 4 Fe(III)-[cytochrome c] + 2 H2O + 4 H(+)(out). Functionally, component of the cytochrome c oxidase, the last enzyme in the mitochondrial electron transport chain which drives oxidative phosphorylation. The respiratory chain contains 3 multisubunit complexes succinate dehydrogenase (complex II, CII), ubiquinol-cytochrome c oxidoreductase (cytochrome b-c1 complex, complex III, CIII) and cytochrome c oxidase (complex IV, CIV), that cooperate to transfer electrons derived from NADH and succinate to molecular oxygen, creating an electrochemical gradient over the inner membrane that drives transmembrane transport and the ATP synthase. Cytochrome c oxidase is the component of the respiratory chain that catalyzes the reduction of oxygen to water. Electrons originating from reduced cytochrome c in the intermembrane space (IMS) are transferred via the dinuclear copper A center (CU(A)) of subunit 2 and heme A of subunit 1 to the active site in subunit 1, a binuclear center (BNC) formed by heme A3 and copper B (CU(B)). The BNC reduces molecular oxygen to 2 water molecules using 4 electrons from cytochrome c in the IMS and 4 protons from the mitochondrial matrix. This Schistocerca gregaria (Desert locust) protein is Cytochrome c oxidase subunit 2 (COII).